The following is a 98-amino-acid chain: Cystatin-B (98 aa).

Residue methionine 1 is modified to N-acetylmethionine. Positions 46-50 (QVVAG) match the Secondary area of contact motif.

Belongs to the cystatin family. As to quaternary structure, able to form dimers stabilized by noncovalent forces.

It localises to the cytoplasm. The protein localises to the nucleus. This is an intracellular thiol proteinase inhibitor. Tightly binding reversible inhibitor of cathepsins L, H and B. The sequence is that of Cystatin-B (CSTB) from Pongo pygmaeus (Bornean orangutan).